We begin with the raw amino-acid sequence, 530 residues long: [Pyruvate dehydrogenase [acetyl-transferring]]-phosphatase 2, mitochondrial (530 aa).

The N-terminal 67 residues, Met-1–Thr-67, are a transit peptide targeting the mitochondrion. A PPM-type phosphatase domain is found at Val-107–Phe-518. Residues Asp-142, Gly-143, Asp-413, and Asp-509 each coordinate Mn(2+).

This sequence belongs to the PP2C family. The cofactor is Mg(2+). As to expression, highly expressed in liver.

It localises to the mitochondrion. It carries out the reaction O-phospho-L-seryl-[pyruvate dehydrogenase E1 alpha subunit] + H2O = L-seryl-[pyruvate dehydrogenase E1 alpha subunit] + phosphate. Its activity is regulated as follows. Mg(2+)-dependent protein phosphatase. Phosphatase activity is increased in the presence of spermine, a naturally produced polyamine. Mitochondrial enzyme that catalyzes the dephosphorylation and concomitant reactivation of the alpha subunit of the E1 component of the pyruvate dehydrogenase complex (PDC), thereby stimulating the conversion of pyruvate into acetyl-CoA. Acts as a crucial regulator of T cell metabolism and function, with a particular focus on T-helper Th17. This is [Pyruvate dehydrogenase [acetyl-transferring]]-phosphatase 2, mitochondrial (Pdp2) from Rattus norvegicus (Rat).